The following is a 181-amino-acid chain: Large ribosomal subunit protein uL5c (181 aa).

Belongs to the universal ribosomal protein uL5 family. As to quaternary structure, part of the 50S ribosomal subunit; contacts the 5S rRNA.

It localises to the plastid. Its subcellular location is the chloroplast. In terms of biological role, binds 5S rRNA, forms part of the central protuberance of the 50S subunit. This chain is Large ribosomal subunit protein uL5c (rpl5), found in Heterosigma akashiwo (strain NIES-293 / 8280G21-1).